Consider the following 254-residue polypeptide: Translation initiation factor 2 subunit alpha (254 aa).

The S1 motif domain occupies 10–81; that stretch reads GDLVVVKITE…ERKNVDLSLK (72 aa).

The protein belongs to the eIF-2-alpha family. Heterotrimer composed of an alpha, a beta and a gamma chain.

Its function is as follows. eIF-2 functions in the early steps of protein synthesis by forming a ternary complex with GTP and initiator tRNA. The sequence is that of Translation initiation factor 2 subunit alpha from Thermoplasma volcanium (strain ATCC 51530 / DSM 4299 / JCM 9571 / NBRC 15438 / GSS1).